The following is a 203-amino-acid chain: Inosine triphosphate pyrophosphatase (203 aa).

10-15 (TGNQNK) is an ITP binding site. Glu-40 is a Mg(2+) binding site. Residues Lys-52, 68 to 69 (DT), Lys-85, 145 to 148 (FGWD), Lys-168, and 173 to 174 (HR) each bind ITP.

The protein belongs to the HAM1 NTPase family. Homodimer. Requires Mg(2+) as cofactor. Mn(2+) serves as cofactor.

It is found in the cytoplasm. It catalyses the reaction ITP + H2O = IMP + diphosphate + H(+). The catalysed reaction is dITP + H2O = dIMP + diphosphate + H(+). It carries out the reaction XTP + H2O = XMP + diphosphate + H(+). Functionally, pyrophosphatase that hydrolyzes non-canonical purine nucleotides such as inosine triphosphate (ITP), deoxyinosine triphosphate (dITP) or xanthosine 5'-triphosphate (XTP) to their respective monophosphate derivatives. The enzyme does not distinguish between the deoxy- and ribose forms. Probably excludes non-canonical purines from RNA and DNA precursor pools, thus preventing their incorporation into RNA and DNA and avoiding chromosomal lesions. The sequence is that of Inosine triphosphate pyrophosphatase from Nematostella vectensis (Starlet sea anemone).